Reading from the N-terminus, the 918-residue chain is Bromodomain testis-specific protein (918 aa).

Residues 1–26 form a disordered region; it reads MSDVKPPQHFTMNGNPPPPEFKNPKK. The Bromo 1 domain maps to 29–135; that stretch reads RLTNHLQYIE…KLFLEKVAEM (107 aa). The short motif at 204–215 is the Nuclear localization signal element; that stretch reads NGVKRKADTTTP. Disordered regions lie at residues 241–267, 379–430, 575–712, 738–764, and 862–899; these read RGSGRPIKPPCKDLPESPPQHQVGRRT, EPKN…RAHR, KNKP…SLVS, IPPLLSPLTSPSAAMPATGSQSTSSSQ, and DTPKAPEPSSVLQNSVDREREMARKREQERRRREAMSG. The region spanning 267 to 376 is the Bromo 2 domain; that stretch reads TKLSERLKYC…DVFEFRFSKI (110 aa). The span at 399–416 shows a compositional bias: low complexity; the sequence is SPSSSESSDSESSSPENS. Residues 426–452 are a coiled coil; it reads ERAHRLASLEEQQLKAVREQLQLLTQT. Residues 496-578 form the NET domain; it reads DSEEEMNTLP…GCLRKKKNKP (83 aa). Over residues 575 to 584 the composition is skewed to basic residues; it reads KNKPPKKSKI. Basic and acidic residues predominate over residues 605-617; sequence KIETDGEIKDTTH. Low complexity-rich tracts occupy residues 622–648 and 739–764; these read SDSSSSSSSSDSSSSDSSSSDSCDSDS and PPLLSPLTSPSAAMPATGSQSTSSSQ. A coiled-coil region spans residues 815-902; that stretch reads EKELTTASRG…RREAMSGVID (88 aa). The segment covering 877 to 896 has biased composition (basic and acidic residues); the sequence is VDREREMARKREQERRRREA.

It belongs to the BET family.

It localises to the nucleus. Functionally, testis-specific chromatin protein that specifically binds histone H4 acetylated at 'Lys-5' and 'Lys-8' (H4K5ac and H4K8ac, respectively) and plays a key role in spermatogenesis. Required in late pachytene spermatocytes: plays a role in meiotic and post-meiotic cells by binding to acetylated histones at the promoter of specific meiotic and post-meiotic genes, facilitating their activation at the appropriate time. In the post-meiotic phase of spermatogenesis, binds to hyperacetylated histones and participates in their general removal from DNA. Also recognizes and binds a subset of butyrylated histones: able to bind histone H4 butyrylated at 'Lys-8' (H4K8ac), while it is not able to bind H4 butyrylated at 'Lys-5' (H4K5ac). The protein is Bromodomain testis-specific protein (brdt) of Danio rerio (Zebrafish).